A 146-amino-acid chain; its full sequence is Putative pre-16S rRNA nuclease (146 aa).

This sequence belongs to the YqgF nuclease family.

It is found in the cytoplasm. In terms of biological role, could be a nuclease involved in processing of the 5'-end of pre-16S rRNA. This chain is Putative pre-16S rRNA nuclease, found in Pseudomonas savastanoi pv. phaseolicola (strain 1448A / Race 6) (Pseudomonas syringae pv. phaseolicola (strain 1448A / Race 6)).